The sequence spans 747 residues: MDDHETPLLSKDLSSSSSSSSSSSSVVVSSLKWILKVVMSVIFVTWVVFLMMYPGSLGDQILTNWRAISSNTLFGLTGSMFLIFSGPILVIAILASLYLIISGEETVFTKKKITKFPRFRLWTFPVLVDGPFGVVSAAEFLGIMVFSVFFLWAIYAYTLRNLNVLDYFHVLPNNRSIFLLELTGLRFGMIGLLCMVFLFLPISRGSILLRLIDIPFEHATRYHVWLGHITMTFFSLHGLCYVVGWTIQGQLLELLFEWKATGIAVLPGVISLVAGLLMWVTSLHTVRKNYFELFFYTHQLYIVFVVFLALHVGDYLFSIVAGGIFLFILDRFLRFYQSRRTVDVISAKSLPCGTLELVLSKPPNMRYNALSFIFLQVKELSWLQWHPFSVSSSPLDGNHHVAVLIKVLGGWTAKLRDQLSTLYEAENQDQLISPESYPKITTCVEGPYGHESPYHLAYENLVLVAGGIGITPFFAILSDILHRKRDGKDCLPGKVLVVWAIKNSDELSLLSAIDIPSICHFFSKKLNLEIHIYVTRQSEPCLEDGMVHKVVHPSVKTPWTNGCSMSVLVGTGDNIWSGLYLIISTIGFIAMITLVDIFYINKYNITTWWYKGLLFVVCMVASVLIFGGLVVVFWHRWEHKTGEVEANGNDKVDLNGEETHNPSAAELKGLAIEEDVQNYTTIRYGTRPAFREIFESLNGKWGSVDVGVIVCGPATLQTTVAKEIRSHSIWRSANHPLFHFNSHSFDL.

Positions 1 to 23 (MDDHETPLLSKDLSSSSSSSSSS) are disordered. The N-terminal 28 residues, 1–28 (MDDHETPLLSKDLSSSSSSSSSSSSVVV), are a transit peptide targeting the chloroplast. The segment covering 14–23 (SSSSSSSSSS) has biased composition (low complexity). The next 6 membrane-spanning stretches (helical) occupy residues 37–56 (VVMSVIFVTWVVFLMMYPGS), 81–99 (FLIFSGPILVIAILASLYL), 132–155 (FGVVSAAEFLGIMVFSVFFLWAIY), 222–245 (YHVWLGHITMTFFSLHGLCYVVGW), 297–321 (THQLYIVFVVFLALHVGDYLFSIVA), and 344–364 (VISAKSLPCGTLELVLSKPPN). Residues 187 to 308 (FGMIGLLCMV…QLYIVFVVFL (122 aa)) form the Ferric oxidoreductase domain. Heme contacts are provided by His223, His237, His298, and His311. The FAD-binding FR-type domain occupies 337 to 454 (QSRRTVDVIS…EGPYGHESPY (118 aa)). 386–389 (HPFS) contributes to the FAD binding site. 446–449 (GPYG) contributes to the NAD(+) binding site. Helical transmembrane passes span 574–596 (NIWSGLYLIISTIGFIAMITLVD) and 612–634 (GLLFVVCMVASVLIFGGLVVVFW).

The protein belongs to the ferric reductase (FRE) family. FAD is required as a cofactor. In terms of tissue distribution, expressed in shoots, flowers and siliques. Detected in cotyledons, leaves and trichomes, but not in roots.

The protein localises to the plastid. Its subcellular location is the chloroplast membrane. The enzyme catalyses 2 a Fe(II)-siderophore + NAD(+) + H(+) = 2 a Fe(III)-siderophore + NADH. In terms of biological role, ferric chelate reductase involved in iron mobilization from the cytosol into the chloroplast. May participate in the transport of electrons to a Fe(3+) ion via FAD and heme intermediates. Might be involved iron homeostasis in trichomes. This Arabidopsis thaliana (Mouse-ear cress) protein is Ferric reduction oxidase 7, chloroplastic (FRO7).